A 1072-amino-acid polypeptide reads, in one-letter code: Carbamoyl phosphate synthase large chain (1072 aa).

The interval 1-401 (MPKYKDINKV…SLLKAVRSLE (401 aa)) is carboxyphosphate synthetic domain. ATP contacts are provided by R129, R169, G175, G176, K208, L210, E215, G241, V242, H243, Q284, and E298. Positions 133-327 (KRKMQEIGEP…IAKIAAKIAI (195 aa)) constitute an ATP-grasp 1 domain. The Mg(2+) site is built by Q284, E298, and N300. 3 residues coordinate Mn(2+): Q284, E298, and N300. The segment at 402 to 544 (IKAYGLRLNN…YIYSTYGEED (143 aa)) is oligomerization domain. The carbamoyl phosphate synthetic domain stretch occupies residues 545-929 (EVEIHDMPKV…ALYKALEGAG (385 aa)). The region spanning 671–861 (SKLLRELNIN…MVKLAVEVAL (191 aa)) is the ATP-grasp 2 domain. Residues R707, K746, I748, E752, G777, V778, H779, S780, Q820, and E832 each contribute to the ATP site. 3 residues coordinate Mg(2+): Q820, E832, and N834. 3 residues coordinate Mn(2+): Q820, E832, and N834. The 143-residue stretch at 930 to 1072 (LKIPKKGKIL…QKDNVKNLVL (143 aa)) folds into the MGS-like domain. The interval 930–1072 (LKIPKKGKIL…QKDNVKNLVL (143 aa)) is allosteric domain.

The protein belongs to the CarB family. In terms of assembly, composed of two chains; the small (or glutamine) chain promotes the hydrolysis of glutamine to ammonia, which is used by the large (or ammonia) chain to synthesize carbamoyl phosphate. Tetramer of heterodimers (alpha,beta)4. Mg(2+) serves as cofactor. The cofactor is Mn(2+).

The enzyme catalyses hydrogencarbonate + L-glutamine + 2 ATP + H2O = carbamoyl phosphate + L-glutamate + 2 ADP + phosphate + 2 H(+). The catalysed reaction is hydrogencarbonate + NH4(+) + 2 ATP = carbamoyl phosphate + 2 ADP + phosphate + 2 H(+). Its pathway is amino-acid biosynthesis; L-arginine biosynthesis; carbamoyl phosphate from bicarbonate: step 1/1. The protein operates within pyrimidine metabolism; UMP biosynthesis via de novo pathway; (S)-dihydroorotate from bicarbonate: step 1/3. In terms of biological role, large subunit of the glutamine-dependent carbamoyl phosphate synthetase (CPSase). CPSase catalyzes the formation of carbamoyl phosphate from the ammonia moiety of glutamine, carbonate, and phosphate donated by ATP, constituting the first step of 2 biosynthetic pathways, one leading to arginine and/or urea and the other to pyrimidine nucleotides. The large subunit (synthetase) binds the substrates ammonia (free or transferred from glutamine from the small subunit), hydrogencarbonate and ATP and carries out an ATP-coupled ligase reaction, activating hydrogencarbonate by forming carboxy phosphate which reacts with ammonia to form carbamoyl phosphate. The polypeptide is Carbamoyl phosphate synthase large chain (Thermoanaerobacter pseudethanolicus (strain ATCC 33223 / 39E) (Clostridium thermohydrosulfuricum)).